We begin with the raw amino-acid sequence, 421 residues long: Exoskeleton protein RP43 (421 aa).

The N-terminal stretch at 1–24 (MRVIFVISLVSFMFVTWQTNPVHC) is a signal peptide. Intrachain disulfides connect cysteine 72-cysteine 104, cysteine 132-cysteine 154, cysteine 193-cysteine 219, cysteine 247-cysteine 269, cysteine 309-cysteine 335, and cysteine 362-cysteine 384. CUB domains follow at residues 72-191 (CSKP…YSIV), 193-306 (CNSL…YSVP), and 309-421 (CSVV…YTTG).

As to expression, detected in vestimentum and trunk but not in opisthosome or obturaculum. In the vestimentum, expression is restricted to epithelial cells under apical cuticular plaques.

Functionally, may play a role in protein-protein interactions during tube assembly. This chain is Exoskeleton protein RP43, found in Riftia pachyptila (Vent tube worm).